Reading from the N-terminus, the 86-residue chain is Large ribosomal subunit protein bL27 (86 aa).

Positions 1–24 (MATKKAGGSSRNGRDSAGRRLGVK) are disordered.

The protein belongs to the bacterial ribosomal protein bL27 family.

The sequence is that of Large ribosomal subunit protein bL27 from Rickettsia conorii (strain ATCC VR-613 / Malish 7).